The following is a 95-amino-acid chain: Small ubiquitin-related modifier 2-A (95 aa).

K11 participates in a covalent cross-link: Glycyl lysine isopeptide (Lys-Gly) (interchain with G-Cter in SUMO). The Ubiquitin-like domain maps to 16-95 (DHINLKVAGQ…VFQQQTGGSF (80 aa)). Residue G93 forms a Glycyl lysine isopeptide (Gly-Lys) (interchain with K-? in acceptor proteins) linkage. A propeptide spanning residues 94–95 (SF) is cleaved from the precursor.

The protein belongs to the ubiquitin family. SUMO subfamily. As to quaternary structure, interacts with sae2 and ube2i. Covalently attached to a number of proteins, including top2. Polymeric chains can be formed through Lys-11 cross-linking. In terms of processing, cleavage of precursor form by a sentrin-specific protease is necessary for function.

It is found in the nucleus. Ubiquitin-like protein that can be covalently attached to proteins as a monomer or as a lysine-linked polymer. Covalent attachment via an isopeptide bond to its substrates requires prior activation by the E1 complex sae1-sae2 and linkage to the E2 enzyme ube2i, and can be promoted by an E3 ligase such as pias1-4. This post-translational modification on lysine residues of proteins plays a crucial role in a number of cellular processes such as nuclear transport, DNA replication and repair, mitosis and signal transduction. Polymeric sumo2 chains are also susceptible to polyubiquitination which functions as a signal for proteasomal degradation of modified proteins. The polypeptide is Small ubiquitin-related modifier 2-A (sumo2-a) (Xenopus laevis (African clawed frog)).